The primary structure comprises 606 residues: Pyruvate decarboxylase 2 (606 aa).

Positions 68 and 155 each coordinate substrate. A thiamine pyrophosphate binding region spans residues 433-515; that stretch reads DSWFNCQKLK…FLINNGGYTI (83 aa). Mg(2+) contacts are provided by Asp483, Asn510, and Gly512. Glu516 serves as a coordination point for substrate.

It belongs to the TPP enzyme family. As to quaternary structure, homotetramer. It depends on a metal cation as a cofactor. Requires thiamine diphosphate as cofactor.

The catalysed reaction is a 2-oxocarboxylate + H(+) = an aldehyde + CO2. This is Pyruvate decarboxylase 2 (PDC2) from Oryza sativa subsp. indica (Rice).